The primary structure comprises 660 residues: MTPATQYPCDPEGVCMRCKSMPPPEESLTCGTCVTPWHVSCLLSPPETLSATLQWLCPDCSGETNPLPVSGVAAGYGSVGSDLVAAIHSIEADETLSAEEKAKKKQQLLSGKGVVDEDDEEEKKKTSKGKKPIDVLSHFECSFCMQSLQKPVSVRVLFALALMLVWFLESTPCGHNACLKCFLKWMGQGHRSCGTCRSVIPESMVTNPRINLSIVSAIRLARVSEKADARTSKVVHYVDNEDRPDKAFTTERAKKTGNANASSGKIFVTIPRDHFGPIPAENDPVRNQGLLVGESWKGRLACRQWGAHFPHVSGIAGQASYGAQSVVLAGGYDDDEDHGEWFLYTGSGGRILKGNKRTNTVQAFDQVFLNFNEALRLSCKLGYPVRVVRSTKDKRSPYAPQGGLLRYDGVYRIEKCWRIVGIQMCRFLFVRCDNEPAPWTSDEHGDRPRPLPNVPELNMATDLFERKESPSWDFDEGEDRWRWMKPPPASKKAVKNVLDPEERKLLREAIKSANPNTMRARLLKEFKCQICQKVMTNPVTTPCAHNFCKACLESKFAGTALVRERGSGGRKLRSQKSVMKCPCCPTDIAEFVQNPQVNREVAEVIEKLKKQEEEENAKSLDEGQCSGTSHEEEDDEQPKKRIKLDTDAEVSATVVESDMK.

The PHD-type zinc finger occupies 12 to 63; it reads EGVCMRCKSMPPPEESLTCGTCVTPWHVSCLLSPPETLSATLQWLCPDCSGE. Residues 107 to 129 form a disordered region; the sequence is QLLSGKGVVDEDDEEEKKKTSKG. The RING-type 1 zinc finger occupies 141–197; that stretch reads CSFCMQSLQKPVSVRVLFALALMLVWFLESTPCGHNACLKCFLKWMGQGHRSCGTCR. Residues 285 to 434 form the YDG domain; sequence VRNQGLLVGE…CRFLFVRCDN (150 aa). The RING-type 2 zinc-finger motif lies at 528–585; sequence CQICQKVMTNPVTTPCAHNFCKACLESKFAGTALVRERGSGGRKLRSQKSVMKCPCCP. Residues 593-622 adopt a coiled-coil conformation; that stretch reads QNPQVNREVAEVIEKLKKQEEEENAKSLDE. Basic and acidic residues-rich tracts occupy residues 610-621 and 637-646; these read KQEEEENAKSLD and QPKKRIKLDT. A disordered region spans residues 610-660; the sequence is KQEEEENAKSLDEGQCSGTSHEEEDDEQPKKRIKLDTDAEVSATVVESDMK.

Its subcellular location is the nucleus. The enzyme catalyses S-ubiquitinyl-[E2 ubiquitin-conjugating enzyme]-L-cysteine + [acceptor protein]-L-lysine = [E2 ubiquitin-conjugating enzyme]-L-cysteine + N(6)-ubiquitinyl-[acceptor protein]-L-lysine.. Its pathway is protein modification; protein ubiquitination. E3 ubiquitin-protein ligase. May participate in CpG methylation-dependent transcriptional regulation. The sequence is that of E3 ubiquitin-protein ligase ORTHRUS 3 (ORTH3) from Arabidopsis thaliana (Mouse-ear cress).